A 143-amino-acid chain; its full sequence is Anti-sigma F factor (143 aa).

This sequence belongs to the anti-sigma-factor family.

The enzyme catalyses L-seryl-[protein] + ATP = O-phospho-L-seryl-[protein] + ADP + H(+). It carries out the reaction L-threonyl-[protein] + ATP = O-phospho-L-threonyl-[protein] + ADP + H(+). Binds to sigma F and blocks its ability to form an RNA polymerase holoenzyme (E-sigma F). Phosphorylates SpoIIAA on a serine residue. This phosphorylation may enable SpoIIAA to act as an anti-anti-sigma factor that counteracts SpoIIAB and thus releases sigma F from inhibition. This Clostridium botulinum (strain Eklund 17B / Type B) protein is Anti-sigma F factor.